Here is a 79-residue protein sequence, read N- to C-terminus: Methionine-rich peptide X (79 aa).

The N-terminal stretch at 1-22 is a signal peptide; the sequence is MKKLAAVMLTSCLMVAVGASFA. The disordered stretch occupies residues 37-79; the sequence is KKDDMAKDEMKKDSMAKDGMKKDAMKKDAMMKKDGMTKDEMKK.

In terms of processing, protein is oxidized (possibly on Met residues) when cells are exposed to chlorite or hypochlorite; initially the protein is highly oxidized, by 50 minutes all protein is in the reduced form.

The protein localises to the periplasm. Its function is as follows. Serves as an oxidative stress sink, specifically for chlorite and hypochlorite. This Azospira oryzae (strain ATCC BAA-33 / DSM 13638 / PS) (Dechlorosoma suillum) protein is Methionine-rich peptide X.